The following is a 575-amino-acid chain: Physarolisin (575 aa).

An N-terminal signal peptide occupies residues 1–18 (MRLLSLLFLLGLATLSFA). Residues 19–173 (VRSQWAQQGR…SIKNARTQVG (155 aa)) constitute a propeptide, removed in mature form. Positions 179 to 574 (YIVPYVIFDL…SKLLAFVQTL (396 aa)) constitute a Peptidase S53 domain. Residue N200 is glycosylated (N-linked (GlcNAc...) asparagine). Residues E248 and D252 each act as charge relay system in the active site. N-linked (GlcNAc...) asparagine glycans are attached at residues N262, N307, N380, and N453. S484 acts as the Charge relay system in catalysis. 4 residues coordinate Ca(2+): D529, I530, G552, and D554.

Ca(2+) serves as cofactor. Autocatalytically processed. In terms of processing, N-glycosylated.

The catalysed reaction is Milk clotting activity. Preferential cleavage of 8-Gly-|-Ser-9 in B chain of insulin most rapidly, followed by 11-Leu-|-Val-12, 19-Cys(SO(3)H)-|-Gly and 24-Phe-|-Phe-25. No action on Ac-Phe-Tyr(I)2.. Its activity is regulated as follows. Inhibited by diisopropylfluorophosphate (DFP) and diazoacetyl-D,L-norleucine methyl ester (DAN). The protein is Physarolisin of Physarum polycephalum (Slime mold).